Reading from the N-terminus, the 486-residue chain is Membrane-bound lytic murein transglycosylase F (486 aa).

An N-terminal signal peptide occupies residues 1 to 28 (MFAHTLFRKRCAIWLLAIGIFLMLGSCA). Residues 29 to 267 (EKPSELERIK…RLRERYYGHV (239 aa)) are non-LT domain. The interval 268–486 (DVLGYVGAYA…TDLMEELPPL (219 aa)) is LT domain. The active site involves E314.

It in the N-terminal section; belongs to the bacterial solute-binding protein 3 family. The protein in the C-terminal section; belongs to the transglycosylase Slt family.

It is found in the cell outer membrane. It catalyses the reaction Exolytic cleavage of the (1-&gt;4)-beta-glycosidic linkage between N-acetylmuramic acid (MurNAc) and N-acetylglucosamine (GlcNAc) residues in peptidoglycan, from either the reducing or the non-reducing ends of the peptidoglycan chains, with concomitant formation of a 1,6-anhydrobond in the MurNAc residue.. Murein-degrading enzyme that degrades murein glycan strands and insoluble, high-molecular weight murein sacculi, with the concomitant formation of a 1,6-anhydromuramoyl product. Lytic transglycosylases (LTs) play an integral role in the metabolism of the peptidoglycan (PG) sacculus. Their lytic action creates space within the PG sacculus to allow for its expansion as well as for the insertion of various structures such as secretion systems and flagella. The polypeptide is Membrane-bound lytic murein transglycosylase F (Stutzerimonas stutzeri (strain A1501) (Pseudomonas stutzeri)).